We begin with the raw amino-acid sequence, 163 residues long: Succinate dehydrogenase assembly factor 2-B, mitochondrial (163 aa).

A mitochondrion-targeting transit peptide spans 1–23 (MFRQLRLTMDISGWIFMPWRRSL).

The protein belongs to the SDHAF2 family. As to quaternary structure, interacts with the flavoprotein subunit within the SDH catalytic dimer.

The protein resides in the mitochondrion matrix. In terms of biological role, plays an essential role in the assembly of succinate dehydrogenase (SDH), an enzyme complex (also referred to as respiratory complex II) that is a component of both the tricarboxylic acid (TCA) cycle and the mitochondrial electron transport chain, and which couples the oxidation of succinate to fumarate with the reduction of ubiquinone (coenzyme Q) to ubiquinol. Required for flavinylation (covalent attachment of FAD) of the flavoprotein subunit of the SDH catalytic dimer. The sequence is that of Succinate dehydrogenase assembly factor 2-B, mitochondrial from Drosophila ananassae (Fruit fly).